Consider the following 274-residue polypeptide: Bis(5'-nucleosyl)-tetraphosphatase, symmetrical (274 aa).

Belongs to the Ap4A hydrolase family.

It catalyses the reaction P(1),P(4)-bis(5'-adenosyl) tetraphosphate + H2O = 2 ADP + 2 H(+). Its function is as follows. Hydrolyzes diadenosine 5',5'''-P1,P4-tetraphosphate to yield ADP. The polypeptide is Bis(5'-nucleosyl)-tetraphosphatase, symmetrical (Shewanella loihica (strain ATCC BAA-1088 / PV-4)).